We begin with the raw amino-acid sequence, 157 residues long: Alanyl-tRNA editing protein AlaX-S (157 aa).

His-9, His-13, Cys-116, and His-120 together coordinate Zn(2+).

It belongs to the class-II aminoacyl-tRNA synthetase family. Editing domain AlaX-S subfamily. In terms of assembly, monomer and homodimer; the dimer is less active in tRNA editing and does not have a zinc ion associated with it. Another report shows only a monomeric form. It depends on Zn(2+) as a cofactor.

Its subcellular location is the cytoplasm. Functionally, functions in trans to edit the amino acid moiety from mischarged charged Ser-tRNA(Ala). Has little activity against Gly-tRNA(Ala). This chain is Alanyl-tRNA editing protein AlaX-S (alaXS), found in Pyrococcus horikoshii (strain ATCC 700860 / DSM 12428 / JCM 9974 / NBRC 100139 / OT-3).